The following is a 138-amino-acid chain: Large ribosomal subunit protein uL16 (138 aa).

Belongs to the universal ribosomal protein uL16 family. Part of the 50S ribosomal subunit.

Its function is as follows. Binds 23S rRNA and is also seen to make contacts with the A and possibly P site tRNAs. The protein is Large ribosomal subunit protein uL16 of Rhodospirillum rubrum (strain ATCC 11170 / ATH 1.1.1 / DSM 467 / LMG 4362 / NCIMB 8255 / S1).